We begin with the raw amino-acid sequence, 610 residues long: Pentatricopeptide repeat-containing protein At3g15590, mitochondrial (610 aa).

A mitochondrion-targeting transit peptide spans 1-71 (MYSLSRILQR…FSRFFGIHKL (71 aa)). Residues 88-142 (EELSESEEAVPVSGDVPEGVVDDDSLFEPELGSDNDDLEIEEKHSKDGGKPTKKR) form a disordered region. Positions 107-127 (VVDDDSLFEPELGSDNDDLEI) are enriched in acidic residues. A compositionally biased stretch (basic and acidic residues) spans 128–137 (EEKHSKDGGK). PPR repeat units follow at residues 241-275 (GEVV…KFPT), 276-309 (SVFA…NIKP), 310-344 (SRAT…GIEL), 345-379 (DPEL…GLQQ), 380-410 (TPWV…VDQN), 412-442 (RYDN…LVEK), 447-481 (PMMP…GIAI), 482-517 (GPST…KMRP), and 518-552 (MFTT…SYAA).

It belongs to the PPR family. P subfamily.

It is found in the mitochondrion. The chain is Pentatricopeptide repeat-containing protein At3g15590, mitochondrial from Arabidopsis thaliana (Mouse-ear cress).